Here is a 118-residue protein sequence, read N- to C-terminus: Large ribosomal subunit protein uL18 (118 aa).

The protein belongs to the universal ribosomal protein uL18 family. As to quaternary structure, part of the 50S ribosomal subunit; part of the 5S rRNA/L5/L18/L25 subcomplex. Contacts the 5S and 23S rRNAs.

Its function is as follows. This is one of the proteins that bind and probably mediate the attachment of the 5S RNA into the large ribosomal subunit, where it forms part of the central protuberance. This chain is Large ribosomal subunit protein uL18, found in Campylobacter concisus (strain 13826).